Reading from the N-terminus, the 473-residue chain is Photosystem II CP43 reaction center protein (473 aa).

Positions 1-14 (MKTLYSLRRFYPVE) are excised as a propeptide. Threonine 15 bears the N-acetylthreonine mark. Threonine 15 is subject to Phosphothreonine. The next 5 membrane-spanning stretches (helical) occupy residues 69–93 (LFEV…PHLA), 134–155 (LLGP…KDRN), 178–200 (KALY…RKIT), 255–275 (KPFA…LSYS), and 291–312 (WFNN…ASQA). Glutamate 367 provides a ligand contact to [CaMn4O5] cluster. The chain crosses the membrane as a helical span at residues 447-471 (RARAAAAGFEKGIDRDFEPVLFMTP).

The protein belongs to the PsbB/PsbC family. PsbC subfamily. As to quaternary structure, PSII is composed of 1 copy each of membrane proteins PsbA, PsbB, PsbC, PsbD, PsbE, PsbF, PsbH, PsbI, PsbJ, PsbK, PsbL, PsbM, PsbT, PsbX, PsbY, PsbZ, Psb30/Ycf12, at least 3 peripheral proteins of the oxygen-evolving complex and a large number of cofactors. It forms dimeric complexes. Binds multiple chlorophylls and provides some of the ligands for the Ca-4Mn-5O cluster of the oxygen-evolving complex. It may also provide a ligand for a Cl- that is required for oxygen evolution. PSII binds additional chlorophylls, carotenoids and specific lipids. serves as cofactor.

It localises to the plastid. The protein resides in the chloroplast thylakoid membrane. Functionally, one of the components of the core complex of photosystem II (PSII). It binds chlorophyll and helps catalyze the primary light-induced photochemical processes of PSII. PSII is a light-driven water:plastoquinone oxidoreductase, using light energy to abstract electrons from H(2)O, generating O(2) and a proton gradient subsequently used for ATP formation. This is Photosystem II CP43 reaction center protein from Cucumis sativus (Cucumber).